A 285-amino-acid polypeptide reads, in one-letter code: Gas vesicle protein C2 (285 aa).

Tandem repeats lie at residues 22–52 (EAMDAYAEEFAADVNSIRTDSRHRENIRDMR), 53–84 (AAVDAYCESFATAVSTHHDETAALRADLEATA), 85–122 (AAFDAYTTAFAADAAAMHDVSALHRDIEALREEFRAVT), 123–155 (TDFEDYTTDEFAPAVGALHADAAETAASFTAKQ), 156–188 (EGFEAYRHDVHESAVPALTADIAATRADFDDTA), and 189–220 (ASFAAYARAFYGHTDDATAQTDADDTTAQTDV). The segment at 22–220 (EAMDAYAEEF…ADDTTAQTDV (199 aa)) is 6 X approximate tandem repeats.

The protein belongs to the halobacterial gas vesicle GvpC family.

It is found in the gas vesicle. Functionally, confers stability, involved in shaping gas vesicles (GV), hollow, gas filled proteinaceous nanostructures. GVs allow positioning of halobacteria at an optimal depth for growth in the poorly aerated, shallow brine pools of their habitat. In terms of biological role, expression of 2 c-vac DNA fragments containing 2 divergently transcribed regions (gvpE-gvpF-gvpG-gvpH-gvpI-gvpJ-gvpK-gvpL-gvpM and gvpA-gvpC-gvpN-gvpO) allows H.volcanii to produce gas vesicles. The protein is Gas vesicle protein C2 of Halobacterium salinarum (strain ATCC 700922 / JCM 11081 / NRC-1) (Halobacterium halobium).